An 84-amino-acid chain; its full sequence is Small ribosomal subunit protein uS17 (84 aa).

This sequence belongs to the universal ribosomal protein uS17 family. As to quaternary structure, part of the 30S ribosomal subunit.

Functionally, one of the primary rRNA binding proteins, it binds specifically to the 5'-end of 16S ribosomal RNA. This Vibrio parahaemolyticus serotype O3:K6 (strain RIMD 2210633) protein is Small ribosomal subunit protein uS17.